Here is a 529-residue protein sequence, read N- to C-terminus: MQQRRPVRRALLSVSDKAGIIEFAQALSARGVELLSTGGTARLLAEKGLPVTEVSDYTGFPEMMDGRVKTLHPKVHGGILGRRGQDDAIMEQHHIAPIDMVVVNLYLFAETVAREGCSLEDAVENIDIGGPTMVRSAAKNHKDVAIVVKSSDYDAIIKEMDANEGSLTLDTRFDLAIKAFEHTAAYDSMIANYFGSMVPAYHGESKEAAGRFPRTLNLNFIKKQDMRYGENSHQQAAFYIEENVKEASVATAQQVQGKALSYNNIADTDAALECVKAFNEPACVIVKHANPCGVAVSTSILDAYDRAYKTDPTSAFGGIIAFNRELDAETAQAIISRQFVEVIIAPSATEEALKITAAKQNVRVLTCGQWAQRVPGLDFKRVNGGLLVQDRDLGMVSEAELRVVSKRQPTEQELRDALFCWKVAKFVKSNAIVYAKENMTIGIGAGQMSRVYSAKIAGIKAADEGLEVKGSAMASDAFFPFRDGIDAAAAVGVSCVIQPGGSIRDEEVIAAADEHGIAMIFTDMRHFRH.

An MGS-like domain is found at 1–148; sequence MQQRRPVRRA…KNHKDVAIVV (148 aa).

It belongs to the PurH family.

The enzyme catalyses (6R)-10-formyltetrahydrofolate + 5-amino-1-(5-phospho-beta-D-ribosyl)imidazole-4-carboxamide = 5-formamido-1-(5-phospho-D-ribosyl)imidazole-4-carboxamide + (6S)-5,6,7,8-tetrahydrofolate. It catalyses the reaction IMP + H2O = 5-formamido-1-(5-phospho-D-ribosyl)imidazole-4-carboxamide. It functions in the pathway purine metabolism; IMP biosynthesis via de novo pathway; 5-formamido-1-(5-phospho-D-ribosyl)imidazole-4-carboxamide from 5-amino-1-(5-phospho-D-ribosyl)imidazole-4-carboxamide (10-formyl THF route): step 1/1. The protein operates within purine metabolism; IMP biosynthesis via de novo pathway; IMP from 5-formamido-1-(5-phospho-D-ribosyl)imidazole-4-carboxamide: step 1/1. In Salmonella paratyphi C (strain RKS4594), this protein is Bifunctional purine biosynthesis protein PurH.